We begin with the raw amino-acid sequence, 72 residues long: Large ribosomal subunit protein uL29 (72 aa).

It belongs to the universal ribosomal protein uL29 family. In terms of assembly, part of the 50S ribosomal subunit.

In Pyrococcus furiosus (strain ATCC 43587 / DSM 3638 / JCM 8422 / Vc1), this protein is Large ribosomal subunit protein uL29.